The primary structure comprises 441 residues: MAGUK p55 subfamily member 4 (441 aa).

Residues 1 to 84 enclose the PDZ domain; that stretch reads MRTVCLVKNQ…TIMFKVIPVS (84 aa). The 71-residue stretch at 91 to 161 folds into the SH3 domain; it reads QTTVYVRAMI…PSNHLLKRKQ (71 aa). Residues 232–421 form the Guanylate kinase-like domain; the sequence is HRLIVLVGPS…ARAQLLSAIQ (190 aa). Residues 373–430 are a coiled coil; that stretch reads VDMKFKDEDLQEMEELAQKMESQFGQFFDHVIVNDNLQDARAQLLSAIQKAEEELQWV.

Belongs to the MAGUK family. As to quaternary structure, interacts with MPDZ. May interact with GRIA2. Forms a complex with CRB1 and PALS1. Interacts with FASLG. In terms of tissue distribution, highly expressed in brain and detected in lung, and bone (at protein level). Also expressed in intestine and spleen.

Its subcellular location is the cytoplasm. Functionally, may play a role in retinal photoreceptors development. This chain is MAGUK p55 subfamily member 4 (Mpp4), found in Rattus norvegicus (Rat).